The primary structure comprises 183 residues: Ribosome maturation factor RimM (183 aa).

A PRC barrel domain is found at 102–183 (DDDFYWHQLE…CITVDWDPEF (82 aa)).

It belongs to the RimM family. As to quaternary structure, binds ribosomal protein uS19.

It is found in the cytoplasm. In terms of biological role, an accessory protein needed during the final step in the assembly of 30S ribosomal subunit, possibly for assembly of the head region. Essential for efficient processing of 16S rRNA. May be needed both before and after RbfA during the maturation of 16S rRNA. It has affinity for free ribosomal 30S subunits but not for 70S ribosomes. The protein is Ribosome maturation factor RimM of Saccharophagus degradans (strain 2-40 / ATCC 43961 / DSM 17024).